We begin with the raw amino-acid sequence, 2176 residues long: Protein sidekick-2 (2176 aa).

The first 24 residues, 1–24 (MFSSMWRLPLWTLLALHRIHSAGA), serve as a signal peptide directing secretion. Residues 25-1936 (QDDVPPYFKT…ASPFYEEWWF (1912 aa)) lie on the Extracellular side of the membrane. Ig-like C2-type domains follow at residues 30 to 112 (PYFK…TEVQ), 117 to 204 (GSFE…QPIT), 219 to 298 (PTII…SSVA), 312 to 402 (PQFV…LAVT), 406 to 495 (PNIT…ADLV), and 500 to 589 (TRIT…AHLR). A disulfide bridge links Cys-52 with Cys-95. A glycan (N-linked (GlcNAc...) asparagine) is linked at Asn-197. Disulfide bonds link Cys-241–Cys-288, Cys-334–Cys-384, Cys-427–Cys-479, and Cys-521–Cys-573. Fibronectin type-III domains lie at 596 to 692 (APEH…LPEE), 697 to 793 (PPQN…TLQG), 798 to 897 (PPGN…THED), 901 to 995 (PVGH…VPPE), 999 to 1098 (APTN…TLQA), 1103 to 1201 (APAN…TRES), 1206 to 1303 (GPTN…TLDD), 1307 to 1401 (PPMG…TEKR), 1406 to 1503 (PPSK…TLQA), 1508 to 1625 (APTI…VGEA), 1630 to 1726 (APQN…TQQA), 1730 to 1825 (APGS…TGPG), and 1828 to 1930 (APGP…ASPF). Asn-747 carries N-linked (GlcNAc...) asparagine glycosylation. N-linked (GlcNAc...) asparagine glycosylation is found at Asn-940 and Asn-952. An N-linked (GlcNAc...) asparagine glycan is attached at Asn-1106. N-linked (GlcNAc...) asparagine glycosylation is present at Asn-1592. Residues 1712–1734 (DGPRSTPTRGQTQQAAPSAPGSV) form a disordered region. The span at 1716 to 1727 (STPTRGQTQQAA) shows a compositional bias: polar residues. Residues 1937–1957 (LVVIALVGLIFILLLVFVLII) form a helical membrane-spanning segment. The Cytoplasmic portion of the chain corresponds to 1958–2176 (RGQSKKYSKK…APIAGFSSFV (219 aa)). Disordered stretches follow at residues 2013–2032 (GLYT…YSDE), 2043–2070 (AESS…VDTN), and 2102–2176 (QAYS…SSFV). 2 stretches are compositionally biased toward polar residues: residues 2044–2070 (ESSS…VDTN) and 2119–2129 (VPNSNSTQQGS). The short motif at 2170–2176 (AGFSSFV) is the PDZ-binding element.

The protein belongs to the sidekick family. As to quaternary structure, homodimer; mediates homophilic interactions to promote cell adhesion. Interacts (via PDZ-binding motif) with MAGI1, MAGI2, DLG2, DLG3 and DLG4. In terms of tissue distribution, expressed in retinal ganglion cells (RGCs) that form synapses in distinct inner plexiform layer (IPL) sublaminae. Specifically expressed in specific subsets of retinal ganglion cells (RGCs), named W3B-RGCs, that specifically respond when the timing of the movement of a small object differs from that of the background, but not when they coincide (at protein level). Also present in excitatory amacrine cell type called VG3-ACs, that provide strong and selective input W3B-RGCs (at protein level). Expressed at low levels in the glomeruli.

It is found in the cell membrane. It localises to the synapse. Functionally, adhesion molecule that promotes lamina-specific synaptic connections in the retina and is specifically required for the formation of neuronal circuits that detect motion. Acts by promoting formation of synapses between two specific retinal cell types: the retinal ganglion cells W3B-RGCs and the excitatory amacrine cells VG3-ACs. Formation of synapses between these two cells plays a key role in detection of motion. Promotes synaptic connectivity via homophilic interactions. This Mus musculus (Mouse) protein is Protein sidekick-2.